We begin with the raw amino-acid sequence, 565 residues long: Polycomb protein EED (565 aa).

WD repeat units follow at residues 89 to 133 (DDGN…LYRT), 136 to 176 (GHGG…EKQP), 185 to 224 (GHSY…NEHM), and 240 to 278 (IHNN…SDDP). Residues 417 to 488 (VKKAPGAAGS…SASPDPDSPF (72 aa)) are disordered. The segment covering 429-450 (GTAANGGHNNNNNNNNNNNNNN) has biased composition (low complexity). Positions 451 to 468 (HETGSQRSFSATNNLSNS) are enriched in polar residues. The stretch at 519-559 (IDGAFVGRQVGWSPEGEWCVVVGNGNRALIYQRWGKERGLG) is one WD 5 repeat.

The protein belongs to the WD repeat ESC family. As to quaternary structure, component of the polycomb repressive complex 2 (PRC2) that consists of four core subunits icluding EZH2, EED, SUZ12, and RBBP4, among which EZH2 is the catalytic subunit and which minimally requires EED and SUZ12 for catalysis.

Its subcellular location is the nucleus. Functionally, component of the of the Polycomb Repressive Complex 2 (PRC2), a histone H3 lysine methyltransferase responsible for generating mono-, di-, and tri-methylation on Lys27 (H3K27me1, H3K27me2 and H3K27me3). The tri-methylated form is known to be critical in gene repression, and its proper placement is essential in defining repression patterns during development. EED is not a catalytic subunit but is required for the complex regulation of histone H3 lysine methylation by EZH2. In Chaetomium thermophilum (strain DSM 1495 / CBS 144.50 / IMI 039719) (Thermochaetoides thermophila), this protein is Polycomb protein EED.